Here is a 561-residue protein sequence, read N- to C-terminus: Nucleoprotein (561 aa).

Positions 52 to 237 (VRKDKRTDSD…ISHEPSALNI (186 aa)) are binding site for the cap structure m7GTP. Positions 336-355 (SKPSAIQPPVRNGGSPDLKQ) are disordered. The Mn(2+) site is built by Asp380 and Glu382. Residues Glu390, Cys497, His500, and Cys521 each contribute to the Zn(2+) site. Asp525 lines the Mn(2+) pocket.

It belongs to the arenaviridae nucleocapsid protein family. In terms of assembly, homomultimerizes to form the nucleocapsid. Binds to viral genomic RNA. Interacts with glycoprotein G2. Interacts with protein Z; this interaction probably directs the encapsidated genome to budding sites. Interacts with protein L; this interaction does not interfere with Z-L interaction. Interacts with host IKBKE (via Protein kinase domain); the interaction inhibits IKBKE kinase activity.

Its subcellular location is the virion. The protein resides in the host cytoplasm. Its function is as follows. Encapsidates the genome, protecting it from nucleases. The encapsidated genomic RNA is termed the nucleocapsid (NC). Serves as template for viral transcription and replication. The increased presence of protein N in host cell does not seem to trigger the switch from transcription to replication as observed in other negative strain RNA viruses. Through the interaction with host IKBKE, strongly inhibits the phosphorylation and nuclear translocation of host IRF3, a protein involved in interferon activation pathway, leading to the inhibition of interferon-beta and IRF3-dependent promoters activation. Also encodes a functional 3'-5' exoribonuclease that degrades preferentially dsRNA substrates and thereby participates in the suppression of interferon induction. The polypeptide is Nucleoprotein (Cavia cutleri (Guinea pig)).